We begin with the raw amino-acid sequence, 329 residues long: Glycerol-3-phosphate dehydrogenase [NAD(P)+] (329 aa).

The NADPH site is built by W15, H35, and K107. 3 residues coordinate sn-glycerol 3-phosphate: K107, G135, and S137. A139 serves as a coordination point for NADPH. K190, D243, S253, R254, and N255 together coordinate sn-glycerol 3-phosphate. Residue K190 is the Proton acceptor of the active site. R254 serves as a coordination point for NADPH. NADPH-binding residues include L276 and E278.

The protein belongs to the NAD-dependent glycerol-3-phosphate dehydrogenase family.

It localises to the cytoplasm. It carries out the reaction sn-glycerol 3-phosphate + NAD(+) = dihydroxyacetone phosphate + NADH + H(+). The catalysed reaction is sn-glycerol 3-phosphate + NADP(+) = dihydroxyacetone phosphate + NADPH + H(+). The protein operates within membrane lipid metabolism; glycerophospholipid metabolism. Its function is as follows. Catalyzes the reduction of the glycolytic intermediate dihydroxyacetone phosphate (DHAP) to sn-glycerol 3-phosphate (G3P), the key precursor for phospholipid synthesis. The sequence is that of Glycerol-3-phosphate dehydrogenase [NAD(P)+] from Rhodopseudomonas palustris (strain HaA2).